The sequence spans 122 residues: Methylglyoxal synthase (122 aa).

The MGS-like domain maps to 1–122 (MRIALIAHDK…DLFIKHLKGK (122 aa)). Substrate is bound by residues histidine 8, lysine 12, 34-37 (TGTT), and 54-55 (SG). Catalysis depends on aspartate 60, which acts as the Proton donor/acceptor. Histidine 87 lines the substrate pocket.

This sequence belongs to the methylglyoxal synthase family.

The enzyme catalyses dihydroxyacetone phosphate = methylglyoxal + phosphate. Its function is as follows. Catalyzes the formation of methylglyoxal from dihydroxyacetone phosphate. This Acholeplasma laidlawii (strain PG-8A) protein is Methylglyoxal synthase.